A 1091-amino-acid chain; its full sequence is Neural cell adhesion molecule 1 (1091 aa).

Positions 1 to 19 (MLPAAALPWTLFFLGAAAS) are cleaved as a signal peptide. 5 consecutive Ig-like C2-type domains span residues 20 to 113 (LQVD…VNVK), 116 to 205 (QKLM…KDIQ), 212 to 301 (PSVR…ATIH), 308 to 403 (PKIT…LEVQ), and 406 to 495 (PKLQ…FILV). At 20–711 (LQVDIVPSQG…STSPTSGLGT (692 aa)) the chain is on the extracellular side. 2 disulfide bridges follow: Cys-41–Cys-96 and Cys-139–Cys-189. Heparin contacts are provided by residues 152 to 156 (KHKGR) and 161 to 165 (KKDVR). The N-linked (GlcNAc...) asparagine glycan is linked to Asn-222. Residues Cys-235 and Cys-287 are joined by a disulfide bond. N-linked (GlcNAc...) asparagine glycans are attached at residues Asn-315, Asn-347, Asn-423, Asn-449, and Asn-478. A disulfide bond links Cys-329 and Cys-385. A disulfide bond links Cys-426 and Cys-479. 2 Fibronectin type-III domains span residues 499–598 (TPSS…TQPV) and 600–696 (EPSA…SAQP). A helical membrane pass occupies residues 712 to 729 (AAIVGILIVIFVLLLVAV). Residues 730 to 1091 (DVTCYFLNKC…ATEIRHLQQK (362 aa)) are Cytoplasmic-facing. 4 disordered regions span residues 756 to 809 (GAKG…TEPE), 840 to 916 (ATAQ…NNLS), 937 to 1023 (ETSK…GTFK), and 1041 to 1091 (TPAS…LQQK). The segment covering 758–799 (KGKDMEEGKAAFSKDESKEPIVEVRTEEERTPNHDGGKHTEP) has biased composition (basic and acidic residues). Residues 845-856 (SPTSETTTLTSS) show a composition bias toward low complexity. Composition is skewed to polar residues over residues 904-916 (DTPSSAPATNNLS) and 980-1012 (QPSTVKSPTETAKNPSNPKSEAASGGTTNPSQN). Composition is skewed to basic and acidic residues over residues 1013–1023 (EDFKMDEGTFK) and 1068–1091 (KTEKTPVEDKSEVQATEIRHLQQK).

In terms of processing, polysialylated by ST8SIA2 and ST8SIA4. Polysialylation modulates cell interactions by confering both attractive and repulsive properties that are highly regulated by ST8SIA2 and ST8SIA4. Polysialylation is formed on a-2,3-linked sialic acid of core glycans.

It localises to the cell membrane. Its function is as follows. This protein is a cell adhesion molecule involved in neuron-neuron adhesion, neurite fasciculation, outgrowth of neurites, etc. The polypeptide is Neural cell adhesion molecule 1 (Gallus gallus (Chicken)).